Here is a 421-residue protein sequence, read N- to C-terminus: Functional amyloid transporter FapF (421 aa).

The N-terminal stretch at 1-24 (MTQTLSLRAVLCATTLVSPFLAQA) is a signal peptide. Positions 23–64 (QAATESEVEALKKELLELRQRYEAQQNALMVLEQRVRQVEAQ) form a coiled coil.

It belongs to the amyloid transporter (TC 9.B.153) family.

It localises to the secreted. The protein localises to the cell surface. The protein resides in the cell outer membrane. Transports fibril components across the outer membrane. Upon overexpression of the endogenous six-gene locus (fapA-fapF), cells form large clumps during liquid growth, make large amounts of biofilm and produce amyloid fibrils. The sequence is that of Functional amyloid transporter FapF from Pseudomonas aeruginosa (strain ATCC 15692 / DSM 22644 / CIP 104116 / JCM 14847 / LMG 12228 / 1C / PRS 101 / PAO1).